The chain runs to 340 residues: Entry-fusion complex protein OPG094 (340 aa).

Positions 1 to 20 are disordered; that stretch reads MGGGVSVELPKRDPPPGVPT. Gly2 is lipidated: N-myristoyl glycine; by host. The Virion surface segment spans residues 2–319; sequence GGGVSVELPK…VQHNIKHSFD (318 aa). The chain crosses the membrane as a helical; Signal-anchor for type II membrane protein span at residues 320–340; sequence LKLHLISLLSLLVIWILIVAI.

It belongs to the orthopoxvirus OPG086 family. In terms of assembly, interacts with OPG143. Component of the entry fusion complex (EFC) composed of OPG053, OPG076, OPG086, OPG094, OPG095, OPG099, OPG107, OPG143, OPG104, OPG147 and OPG155. Except for OPG095 and OPG053, each of the EFC proteins is required for assembly or stability of the complex. Post-translationally, unglycosylated because produced in viral factories instead of the classic ER -Golgi route.

The protein resides in the virion membrane. Component of the entry fusion complex (EFC), which consists of 11 proteins. During cell infection, this complex mediates entry of the virion core into the host cytoplasm by a two-step mechanism consisting of lipid mixing of the viral and cellular membranes and subsequent pore formation. The sequence is that of Entry-fusion complex protein OPG094 (OPG094) from Cynomys gunnisoni (Gunnison's prairie dog).